Here is a 419-residue protein sequence, read N- to C-terminus: Carboxypeptidase A1 (419 aa).

Residues M1–G16 form the signal peptide. The propeptide at N17–R110 is activation peptide. Positions T121–T414 constitute a Peptidase M14 domain. Zn(2+) contacts are provided by H179 and E182. Substrate-binding positions include H179–E182, R237, and N254–R255. C248 and C271 are disulfide-bonded. Zn(2+) is bound at residue H306. Substrate is bound by residues S307–Y308 and Y358. Catalysis depends on E380, which acts as the Proton donor/acceptor.

Belongs to the peptidase M14 family. Monomer. It depends on Zn(2+) as a cofactor.

Its subcellular location is the secreted. The catalysed reaction is Release of a C-terminal amino acid, but little or no action with -Asp, -Glu, -Arg, -Lys or -Pro.. Functionally, carboxypeptidase that catalyzes the release of a C-terminal amino acid, but has little or no action with -Asp, -Glu, -Arg, -Lys or -Pro. In Mus musculus (Mouse), this protein is Carboxypeptidase A1 (Cpa1).